The sequence spans 544 residues: MGDCVAPKEDLIFRSKLPDIYIPKHLPLHTYCFENISKVGDKSCLINGATGETFTYSQVELLSRKVASGLNKLGIQQGDTIMLLLPNSPEYFFAFLGASYRGAISTMANPFFTSAEVIKQLKASQAKLIITQACYVDKVKDYAAEKNIQIICIDDAPQDCLHFSKLMEADESEMPEVVINSDDVVALPYSSGTTGLPKGVMLTHKGLVTSVAQQVDGDNPNLYMHSEDVMICILPLFHIYSLNAVLCCGLRAGVTILIMQKFDIVPFLELIQKYKVTIGPFVPPIVLAIAKSPVVDKYDLSSVRTVMSGAAPLGKELEDAVRAKFPNAKLGQGYGMTEAGPVLAMCLAFAKEPYEIKSGACGTVVRNAEMKIVDPETNASLPRNQRGEICIRGDQIMKGYLNDPESTRTTIDEEGWLHTGDIGFIDDDDELFIVDRLKEIIKYKGFQVAPAELEALLLTHPTISDAAVVPMIDEKAGEVPVAFVVRTNGFTTTEEEIKQFVSKQVVFYKRIFRVFFVDAIPKSPSGKILRKDLRARIASGDLPK.

6 residues coordinate ATP: Ser-190, Ser-191, Gly-192, Thr-193, Thr-194, and Lys-198. Position 240 (Tyr-240) interacts with (E)-4-coumaroyl-AMP. Position 261 (Lys-261) interacts with CoA. An SBD1 region spans residues 263–332 (DIVPFLELIQ…AKFPNAKLGQ (70 aa)). Ala-310, Gln-332, Gly-333, Thr-337, and Met-345 together coordinate (E)-4-coumaroyl-AMP. Residues Gln-332, Gly-333, and Thr-337 each coordinate ATP. The SBD2 stretch occupies residues 333–400 (GYGMTEAGPV…IRGDQIMKGY (68 aa)). Positions 421 and 436 each coordinate ATP. 2 residues coordinate (E)-4-coumaroyl-AMP: Lys-438 and Lys-442. Residues Lys-444 and Gly-445 each coordinate CoA. Residue Lys-527 participates in ATP binding.

This sequence belongs to the ATP-dependent AMP-binding enzyme family. Requires Mg(2+) as cofactor.

The enzyme catalyses (E)-4-coumarate + ATP + CoA = (E)-4-coumaroyl-CoA + AMP + diphosphate. It carries out the reaction (E)-4-coumarate + ATP + H(+) = (E)-4-coumaroyl-AMP + diphosphate. The catalysed reaction is (E)-4-coumaroyl-AMP + CoA = (E)-4-coumaroyl-CoA + AMP + H(+). It participates in phytoalexin biosynthesis; 3,4',5-trihydroxystilbene biosynthesis; 3,4',5-trihydroxystilbene from trans-4-coumarate: step 1/2. In terms of biological role, carboxylate--CoA ligase that may use 4-coumarate as substrate. Follows a two-step reaction mechanism, wherein the carboxylate substrate first undergoes adenylation by ATP, followed by a thioesterification in the presence of CoA to yield the final CoA thioester. The polypeptide is 4-coumarate--CoA ligase 1 (4CL1) (Petroselinum crispum (Parsley)).